Reading from the N-terminus, the 589-residue chain is Phenylalanine--tRNA ligase beta subunit (589 aa).

One can recognise a B5 domain in the interval 302–379; that stretch reads LAYRKEMVRA…IAYGYNNIQM (78 aa). Mg(2+)-binding residues include Asp-357, Asp-363, Glu-366, and Asp-367.

It belongs to the phenylalanyl-tRNA synthetase beta subunit family. Type 2 subfamily. Heterotetramer; dimer of two heterodimers formed by FARSA and FARSB. Mg(2+) serves as cofactor.

The protein resides in the cytoplasm. The enzyme catalyses tRNA(Phe) + L-phenylalanine + ATP = L-phenylalanyl-tRNA(Phe) + AMP + diphosphate + H(+). This Homo sapiens (Human) protein is Phenylalanine--tRNA ligase beta subunit (FARSB).